Reading from the N-terminus, the 434-residue chain is Serine hydroxymethyltransferase (434 aa).

(6S)-5,6,7,8-tetrahydrofolate-binding positions include Leu-133 and 137 to 139 (GHL). Lys-242 is subject to N6-(pyridoxal phosphate)lysine.

It belongs to the SHMT family. As to quaternary structure, homodimer. Pyridoxal 5'-phosphate is required as a cofactor.

The protein localises to the cytoplasm. It carries out the reaction (6R)-5,10-methylene-5,6,7,8-tetrahydrofolate + glycine + H2O = (6S)-5,6,7,8-tetrahydrofolate + L-serine. Its pathway is one-carbon metabolism; tetrahydrofolate interconversion. It participates in amino-acid biosynthesis; glycine biosynthesis; glycine from L-serine: step 1/1. Functionally, catalyzes the reversible interconversion of serine and glycine with tetrahydrofolate (THF) serving as the one-carbon carrier. This reaction serves as the major source of one-carbon groups required for the biosynthesis of purines, thymidylate, methionine, and other important biomolecules. Also exhibits THF-independent aldolase activity toward beta-hydroxyamino acids, producing glycine and aldehydes, via a retro-aldol mechanism. The protein is Serine hydroxymethyltransferase of Bradyrhizobium sp. (strain BTAi1 / ATCC BAA-1182).